A 775-amino-acid polypeptide reads, in one-letter code: BLOC-2 complex member HPS6 (775 aa).

In terms of assembly, component of the biogenesis of lysosome-related organelles complex-2 (or BLOC2) composed of HPS3, HPS5 and HPS6. Interacts with HPS5 and HPS3. Interacts with biogenesis of lysosome-related organelles complex-1 (BLOC1). Interacts with AP-3 complex. Interacts with MNAT1. Interacts with DCTN1 and dynein intermediate chain. Ubiquitous.

The protein resides in the microsome membrane. The protein localises to the cytoplasm. It is found in the cytosol. It localises to the early endosome membrane. Its subcellular location is the lysosome membrane. Its function is as follows. May regulate the synthesis and function of lysosomes and of highly specialized organelles, such as melanosomes and platelet dense granules. Acts as a cargo adapter for the dynein-dynactin motor complex to mediate the transport of lysosomes from the cell periphery to the perinuclear region. Facilitates retrograde lysosomal trafficking by linking the motor complex to lysosomes, and perinuclear positioning of lysosomes is crucial for the delivery of endocytic cargos to lysosomes, for lysosome maturation and functioning. The sequence is that of BLOC-2 complex member HPS6 (HPS6) from Homo sapiens (Human).